We begin with the raw amino-acid sequence, 225 residues long: ATP-dependent dethiobiotin synthetase BioD (225 aa).

12 to 17 (GVGKTV) provides a ligand contact to ATP. Thr16 is a binding site for Mg(2+). Lys37 is a catalytic residue. Thr41 contacts substrate. ATP contacts are provided by residues Asp49, 108 to 111 (EGAG), and 197 to 199 (PAG). Asp49 and Glu108 together coordinate Mg(2+).

The protein belongs to the dethiobiotin synthetase family. Homodimer. The cofactor is Mg(2+).

It is found in the cytoplasm. The enzyme catalyses (7R,8S)-7,8-diammoniononanoate + CO2 + ATP = (4R,5S)-dethiobiotin + ADP + phosphate + 3 H(+). It participates in cofactor biosynthesis; biotin biosynthesis; biotin from 7,8-diaminononanoate: step 1/2. Catalyzes a mechanistically unusual reaction, the ATP-dependent insertion of CO2 between the N7 and N8 nitrogen atoms of 7,8-diaminopelargonic acid (DAPA, also called 7,8-diammoniononanoate) to form a ureido ring. This Mycolicibacterium smegmatis (strain ATCC 700084 / mc(2)155) (Mycobacterium smegmatis) protein is ATP-dependent dethiobiotin synthetase BioD.